The sequence spans 707 residues: D-(-)-3-hydroxybutyrate oligomer hydrolase (707 aa).

A signal peptide spans 1–32; the sequence is MASVFKVRSASGHVPVVRTLAAMMAVTVVLTA. Catalysis depends on S321, which acts as the Charge relay system.

Belongs to the D-(-)-3-hydroxybutyrate oligomer hydrolase family.

It localises to the secreted. It carries out the reaction (3R)-hydroxybutanoate dimer + H2O = 2 (R)-3-hydroxybutanoate + H(+). The protein operates within lipid metabolism; butanoate metabolism. Participates in the degradation of poly-3-hydroxybutyrate (PHB). It works downstream of poly(3-hydroxybutyrate) depolymerase, hydrolyzing D(-)-3-hydroxybutyrate oligomers of various length (3HB-oligomers) into 3HB-monomers. The polypeptide is D-(-)-3-hydroxybutyrate oligomer hydrolase (Paraburkholderia xenovorans (strain LB400)).